A 416-amino-acid chain; its full sequence is Serine hydroxymethyltransferase 1 (416 aa).

(6S)-5,6,7,8-tetrahydrofolate-binding positions include Leu121 and 125–127 (GHL). Residue Lys229 is modified to N6-(pyridoxal phosphate)lysine. Residues Glu245 and 354-356 (SPF) contribute to the (6S)-5,6,7,8-tetrahydrofolate site.

The protein belongs to the SHMT family. As to quaternary structure, homodimer. It depends on pyridoxal 5'-phosphate as a cofactor.

It localises to the cytoplasm. The enzyme catalyses (6R)-5,10-methylene-5,6,7,8-tetrahydrofolate + glycine + H2O = (6S)-5,6,7,8-tetrahydrofolate + L-serine. It participates in one-carbon metabolism; tetrahydrofolate interconversion. The protein operates within amino-acid biosynthesis; glycine biosynthesis; glycine from L-serine: step 1/1. Catalyzes the reversible interconversion of serine and glycine with tetrahydrofolate (THF) serving as the one-carbon carrier. This reaction serves as the major source of one-carbon groups required for the biosynthesis of purines, thymidylate, methionine, and other important biomolecules. Also exhibits THF-independent aldolase activity toward beta-hydroxyamino acids, producing glycine and aldehydes, via a retro-aldol mechanism. This Vibrio vulnificus (strain CMCP6) protein is Serine hydroxymethyltransferase 1.